Consider the following 481-residue polypeptide: Ribulose bisphosphate carboxylase large chain (481 aa).

A propeptide spanning residues 1-2 (MS) is cleaved from the precursor. Pro3 is modified (N-acetylproline). Lys14 carries the post-translational modification N6,N6,N6-trimethyllysine. Residues Asn123 and Thr173 each coordinate substrate. Lys175 (proton acceptor) is an active-site residue. Residue Lys177 participates in substrate binding. Residues Lys201, Asp203, and Glu204 each coordinate Mg(2+). Lys201 is modified (N6-carboxylysine). The active-site Proton acceptor is the His294. The substrate site is built by Arg295, His327, and Ser379.

The protein belongs to the RuBisCO large chain family. Type I subfamily. Heterohexadecamer of 8 large chains and 8 small chains; disulfide-linked. The disulfide link is formed within the large subunit homodimers. It depends on Mg(2+) as a cofactor. Post-translationally, the disulfide bond which can form in the large chain dimeric partners within the hexadecamer appears to be associated with oxidative stress and protein turnover.

The protein localises to the plastid. It carries out the reaction 2 (2R)-3-phosphoglycerate + 2 H(+) = D-ribulose 1,5-bisphosphate + CO2 + H2O. It catalyses the reaction D-ribulose 1,5-bisphosphate + O2 = 2-phosphoglycolate + (2R)-3-phosphoglycerate + 2 H(+). Functionally, ruBisCO catalyzes two reactions: the carboxylation of D-ribulose 1,5-bisphosphate, the primary event in carbon dioxide fixation, as well as the oxidative fragmentation of the pentose substrate in the photorespiration process. Both reactions occur simultaneously and in competition at the same active site. This Cuscuta sandwichiana (Kauna'oa) protein is Ribulose bisphosphate carboxylase large chain.